Here is a 194-residue protein sequence, read N- to C-terminus: ATP-dependent Clp protease proteolytic subunit (194 aa).

Catalysis depends on Ser98, which acts as the Nucleophile. Residue His123 is part of the active site.

Belongs to the peptidase S14 family. In terms of assembly, fourteen ClpP subunits assemble into 2 heptameric rings which stack back to back to give a disk-like structure with a central cavity, resembling the structure of eukaryotic proteasomes.

It is found in the cytoplasm. The catalysed reaction is Hydrolysis of proteins to small peptides in the presence of ATP and magnesium. alpha-casein is the usual test substrate. In the absence of ATP, only oligopeptides shorter than five residues are hydrolyzed (such as succinyl-Leu-Tyr-|-NHMec, and Leu-Tyr-Leu-|-Tyr-Trp, in which cleavage of the -Tyr-|-Leu- and -Tyr-|-Trp bonds also occurs).. Its function is as follows. Cleaves peptides in various proteins in a process that requires ATP hydrolysis. Has a chymotrypsin-like activity. Plays a major role in the degradation of misfolded proteins. In Clostridium tetani (strain Massachusetts / E88), this protein is ATP-dependent Clp protease proteolytic subunit.